A 331-amino-acid polypeptide reads, in one-letter code: Phenol 2-monooxygenase, oxygenase component DmpL (331 aa).

The protein belongs to the TmoE/XamoE family. As to quaternary structure, the multicomponent enzyme phenol hydroxylase is formed by DmpL (P1 component), DmpM (P2 component), DmpN (P3 component), DmpO (P4 component) and DmpP (P5 component). The oxygenase component is a dimer composed of three subunits, DmpL, DmpN and DmpO (DmpLNO). DmpL interacts with the auxiliary protein DmpK (P0 component).

The enzyme catalyses phenol + NADH + O2 + H(+) = catechol + NAD(+) + H2O. It functions in the pathway aromatic compound metabolism; phenol degradation. Requires DmpM for efficient turnover. The activity of DmpLNO oxygenase is inhibited by dithiothreitol (DTT) by a mechanism apparently involving H(2)O(2) generation. In terms of biological role, part of a multicomponent enzyme which catalyzes the degradation of phenol and some of its methylated derivatives. DmpL, DmpN and DmpO form the oxygenase component of the complex. Required for growth on phenol and for in vitro phenol hydroxylase activity. This chain is Phenol 2-monooxygenase, oxygenase component DmpL, found in Pseudomonas sp. (strain CF600).